Consider the following 110-residue polypeptide: U-scoloptoxin(16)-Er7a (110 aa).

The N-terminal stretch at 1-26 (MTSTRKLSVSCLIVFMVSSLIAVSSG) is a signal peptide.

This sequence belongs to the scoloptoxin-16 family. Post-translationally, contains 4 disulfide bonds. Expressed by the venom gland.

Its subcellular location is the secreted. In Ethmostigmus rubripes (Giant centipede), this protein is U-scoloptoxin(16)-Er7a.